The following is a 555-amino-acid chain: Urocanate hydratase (555 aa).

Residues 51 to 52, glutamine 129, 175 to 177, glutamate 195, 262 to 266, 272 to 273, and tyrosine 321 each bind NAD(+); these read GG, GMG, QTSAH, and YL. Cysteine 409 is an active-site residue. An NAD(+)-binding site is contributed by glycine 491.

This sequence belongs to the urocanase family. NAD(+) serves as cofactor.

The protein localises to the cytoplasm. The catalysed reaction is 4-imidazolone-5-propanoate = trans-urocanate + H2O. It functions in the pathway amino-acid degradation; L-histidine degradation into L-glutamate; N-formimidoyl-L-glutamate from L-histidine: step 2/3. Functionally, catalyzes the conversion of urocanate to 4-imidazolone-5-propionate. The sequence is that of Urocanate hydratase from Stenotrophomonas maltophilia (strain R551-3).